The sequence spans 172 residues: Exocyst complex component 1-like (172 aa).

The chain is Exocyst complex component 1-like from Mus musculus (Mouse).